Consider the following 78-residue polypeptide: Large ribosomal subunit protein uL24 (78 aa).

It belongs to the universal ribosomal protein uL24 family. Part of the 50S ribosomal subunit.

In terms of biological role, one of two assembly initiator proteins, it binds directly to the 5'-end of the 23S rRNA, where it nucleates assembly of the 50S subunit. Its function is as follows. One of the proteins that surrounds the polypeptide exit tunnel on the outside of the subunit. This chain is Large ribosomal subunit protein uL24, found in Campylobacter curvus (strain 525.92).